Reading from the N-terminus, the 302-residue chain is NAD kinase 2 (302 aa).

Catalysis depends on Asp79, which acts as the Proton acceptor. Residues 79 to 80 (DG), 153 to 154 (NE), Asp183, 194 to 199 (TAYSLS), Ala218, and Asn252 contribute to the NAD(+) site.

This sequence belongs to the NAD kinase family. Requires a divalent metal cation as cofactor.

The protein localises to the cytoplasm. It catalyses the reaction NAD(+) + ATP = ADP + NADP(+) + H(+). Its function is as follows. Involved in the regulation of the intracellular balance of NAD and NADP, and is a key enzyme in the biosynthesis of NADP. Catalyzes specifically the phosphorylation on 2'-hydroxyl of the adenosine moiety of NAD to yield NADP. This Prochlorococcus marinus subsp. pastoris (strain CCMP1986 / NIES-2087 / MED4) protein is NAD kinase 2.